The chain runs to 225 residues: MEITAVQSSYYGDMAFKTPPPDLESLLLKERIVYLGMPLFSSDEVKQQVGIDVTQLIIAQLLYLQFDDPDKPIYFYINSTGTSWYTGDAVGFETEAFAICDTLNYIKPPVHTICIGQAMGTAAMILSSGTKGYRASLPHATIVLNQNRTGAQGQATDIQIRAKEVISNKQTMLEILSLNTGQTQEKLAKDMDRTFYLTPAQAKEYGLIDRVLESPAELPKPMAVI.

Belongs to the peptidase S14 family.

Has lost the two conserved residues (Ser and His) proposed to be part of the active site. Therefore it could be inactive. In Synechocystis sp. (strain ATCC 27184 / PCC 6803 / Kazusa), this protein is Putative ATP-dependent Clp protease proteolytic subunit-like (clpR).